The sequence spans 133 residues: Profilin (133 aa).

The protein belongs to the profilin family.

More likely to influence phosphoinositide metabolism than actin assembly. This Cowpox virus (strain GRI-90 / Grishak) (CPV) protein is Profilin.